A 1186-amino-acid polypeptide reads, in one-letter code: DNA-directed RNA polymerase subunit beta (1186 aa).

Positions 1149–1186 (KEEDDDPSTSSDDLGFNIGARPDAAAKEDQVAEEPEFQ) are disordered.

This sequence belongs to the RNA polymerase beta chain family. As to quaternary structure, the RNAP catalytic core consists of 2 alpha, 1 beta, 1 beta' and 1 omega subunit. When a sigma factor is associated with the core the holoenzyme is formed, which can initiate transcription.

It catalyses the reaction RNA(n) + a ribonucleoside 5'-triphosphate = RNA(n+1) + diphosphate. Functionally, DNA-dependent RNA polymerase catalyzes the transcription of DNA into RNA using the four ribonucleoside triphosphates as substrates. The chain is DNA-directed RNA polymerase subunit beta from Bifidobacterium adolescentis (strain ATCC 15703 / DSM 20083 / NCTC 11814 / E194a).